Here is a 354-residue protein sequence, read N- to C-terminus: tRNA-specific 2-thiouridylase MnmA (354 aa).

ATP contacts are provided by residues 7–14 (AMSGGVDS) and methionine 33. Cysteine 94 serves as the catalytic Nucleophile. Cysteine 94 and cysteine 192 are oxidised to a cystine. Glycine 118 provides a ligand contact to ATP. The segment at 141–143 (KDQ) is interaction with tRNA. Cysteine 192 serves as the catalytic Cysteine persulfide intermediate. An interaction with tRNA region spans residues 296-297 (RY).

This sequence belongs to the MnmA/TRMU family.

Its subcellular location is the cytoplasm. It catalyses the reaction S-sulfanyl-L-cysteinyl-[protein] + uridine(34) in tRNA + AH2 + ATP = 2-thiouridine(34) in tRNA + L-cysteinyl-[protein] + A + AMP + diphosphate + H(+). In terms of biological role, catalyzes the 2-thiolation of uridine at the wobble position (U34) of tRNA, leading to the formation of s(2)U34. This is tRNA-specific 2-thiouridylase MnmA from Trichlorobacter lovleyi (strain ATCC BAA-1151 / DSM 17278 / SZ) (Geobacter lovleyi).